We begin with the raw amino-acid sequence, 101 residues long: Integration host factor subunit beta (101 aa).

Residues 58–101 (ARAGRNPRTGAHVPVDQKSVPFFKTGKEMRERLNRDTGAPDSGA) are disordered. The span at 82-92 (TGKEMRERLNR) shows a compositional bias: basic and acidic residues.

The protein belongs to the bacterial histone-like protein family. As to quaternary structure, heterodimer of an alpha and a beta chain.

Functionally, this protein is one of the two subunits of integration host factor, a specific DNA-binding protein that functions in genetic recombination as well as in transcriptional and translational control. The polypeptide is Integration host factor subunit beta (Rhodopseudomonas palustris (strain BisB18)).